We begin with the raw amino-acid sequence, 464 residues long: Integrator complex subunit 12 (464 aa).

The segment at 42 to 98 (GNDSVYRPQPKEVEQPKAMLSKVKPETKASSSTPSSSILSKPLASEKVKKEAEKRTA) is disordered. A compositionally biased stretch (low complexity) spans 69 to 84 (KASSSTPSSSILSKPL). The segment covering 85 to 98 (ASEKVKKEAEKRTA) has biased composition (basic and acidic residues). Residues 156-212 (GLACVVCRQMTVFSGNQLVECQECHNLYHQDCHRPQVTDKDVNDPRLVWYCARCTRQ) form a PHD-type zinc finger. Disordered regions lie at residues 216-252 (MAQK…LKSK) and 312-445 (TNSQ…SQLN). Residues 227 to 239 (PAPSAVSAVTPVA) are compositionally biased toward low complexity. The span at 312-329 (TNSQATSGKPPSLSSVQK) shows a compositional bias: polar residues. A compositionally biased stretch (low complexity) spans 339–371 (SKAGSVSKSGSGGSSSTIPLKPLPPLILGKTGL). Residues 372-382 (SRSMSSDNVSK) are compositionally biased toward polar residues. The span at 384–421 (GLPSPNPSSSGSVSSLSSQLGSNNGSSNTAGSNVNSSN) shows a compositional bias: low complexity. Residues 428–445 (SMQQSGAKGPTSQESQLN) show a composition bias toward polar residues.

Belongs to the Integrator subunit 12 family. In terms of assembly, component of the Integrator complex, composed of core subunits INTS1, INTS2, INTS3, INTS4, INTS5, INTS6, INTS7, INTS8, INTS9/RC74, INTS10, INTS11/CPSF3L, INTS12, INTS13, INTS14 and INTS15. The core complex associates with protein phosphatase 2A subunits PPP2CA and PPP2R1A, to form the Integrator-PP2A (INTAC) complex.

It localises to the nucleus. Functionally, component of the integrator complex, a multiprotein complex that terminates RNA polymerase II (Pol II) transcription in the promoter-proximal region of genes. The integrator complex provides a quality checkpoint during transcription elongation by driving premature transcription termination of transcripts that are unfavorably configured for transcriptional elongation: the complex terminates transcription by (1) catalyzing dephosphorylation of the C-terminal domain (CTD) of Pol II subunit POLR2A/RPB1 and SUPT5H/SPT5, (2) degrading the exiting nascent RNA transcript via endonuclease activity and (3) promoting the release of Pol II from bound DNA. The integrator complex is also involved in terminating the synthesis of non-coding Pol II transcripts, such as enhancer RNAs (eRNAs), small nuclear RNAs (snRNAs), telomerase RNAs and long non-coding RNAs (lncRNAs). This Xenopus laevis (African clawed frog) protein is Integrator complex subunit 12 (ints12).